Consider the following 847-residue polypeptide: Alanine--tRNA ligase (847 aa).

Residues H554, H558, C656, and H660 each contribute to the Zn(2+) site.

Belongs to the class-II aminoacyl-tRNA synthetase family. Zn(2+) serves as cofactor.

It is found in the cytoplasm. It carries out the reaction tRNA(Ala) + L-alanine + ATP = L-alanyl-tRNA(Ala) + AMP + diphosphate. Catalyzes the attachment of alanine to tRNA(Ala) in a two-step reaction: alanine is first activated by ATP to form Ala-AMP and then transferred to the acceptor end of tRNA(Ala). Also edits incorrectly charged Ser-tRNA(Ala) and Gly-tRNA(Ala) via its editing domain. The chain is Alanine--tRNA ligase from Helicobacter pylori (strain ATCC 700392 / 26695) (Campylobacter pylori).